A 65-amino-acid polypeptide reads, in one-letter code: Large ribosomal subunit protein bL35 (65 aa).

The disordered stretch occupies residues 1–26; the sequence is MPKMKTHRGAAKRFRKTGTGKLKRGK.

This sequence belongs to the bacterial ribosomal protein bL35 family.

The polypeptide is Large ribosomal subunit protein bL35 (Clostridium beijerinckii (strain ATCC 51743 / NCIMB 8052) (Clostridium acetobutylicum)).